The primary structure comprises 457 residues: Pup--protein ligase (457 aa).

E9 is a Mg(2+) binding site. R53 contacts ATP. Mg(2+) is bound at residue Y55. D57 acts as the Proton acceptor in catalysis. E63 is a binding site for Mg(2+). ATP is bound by residues T66 and W424.

This sequence belongs to the Pup ligase/Pup deamidase family. Pup-conjugating enzyme subfamily.

It catalyses the reaction ATP + [prokaryotic ubiquitin-like protein]-L-glutamate + [protein]-L-lysine = ADP + phosphate + N(6)-([prokaryotic ubiquitin-like protein]-gamma-L-glutamyl)-[protein]-L-lysine.. The protein operates within protein degradation; proteasomal Pup-dependent pathway. Its pathway is protein modification; protein pupylation. In terms of biological role, catalyzes the covalent attachment of the prokaryotic ubiquitin-like protein modifier Pup to the proteasomal substrate proteins, thereby targeting them for proteasomal degradation. This tagging system is termed pupylation. The ligation reaction involves the side-chain carboxylate of the C-terminal glutamate of Pup and the side-chain amino group of a substrate lysine. The sequence is that of Pup--protein ligase from Xylanimonas cellulosilytica (strain DSM 15894 / JCM 12276 / CECT 5975 / KCTC 9989 / LMG 20990 / NBRC 107835 / XIL07).